Reading from the N-terminus, the 262-residue chain is Pyridoxine 5'-phosphate synthase (262 aa).

Asn6 contacts 3-amino-2-oxopropyl phosphate. Residue 8–9 (DH) participates in 1-deoxy-D-xylulose 5-phosphate binding. Arg17 contributes to the 3-amino-2-oxopropyl phosphate binding site. His43 (proton acceptor) is an active-site residue. 1-deoxy-D-xylulose 5-phosphate is bound by residues Arg45 and His50. Glu70 serves as the catalytic Proton acceptor. 1-deoxy-D-xylulose 5-phosphate is bound at residue Thr102. The active-site Proton donor is the His215. Residues Gly216 and 237-238 (GH) contribute to the 3-amino-2-oxopropyl phosphate site.

The protein belongs to the PNP synthase family. As to quaternary structure, homooctamer; tetramer of dimers.

The protein localises to the cytoplasm. It catalyses the reaction 3-amino-2-oxopropyl phosphate + 1-deoxy-D-xylulose 5-phosphate = pyridoxine 5'-phosphate + phosphate + 2 H2O + H(+). It functions in the pathway cofactor biosynthesis; pyridoxine 5'-phosphate biosynthesis; pyridoxine 5'-phosphate from D-erythrose 4-phosphate: step 5/5. In terms of biological role, catalyzes the complicated ring closure reaction between the two acyclic compounds 1-deoxy-D-xylulose-5-phosphate (DXP) and 3-amino-2-oxopropyl phosphate (1-amino-acetone-3-phosphate or AAP) to form pyridoxine 5'-phosphate (PNP) and inorganic phosphate. The polypeptide is Pyridoxine 5'-phosphate synthase (Helicobacter pylori (strain P12)).